Here is a 750-residue protein sequence, read N- to C-terminus: Photosystem I P700 chlorophyll a apoprotein A1 (750 aa).

8 helical membrane-spanning segments follow: residues 70-93, 156-179, 195-219, 291-309, 346-369, 385-411, 433-455, and 531-549; these read VFSA…FHGA, LYCT…FHYH, LNHH…HVSL, IAHH…GHMY, WHAQ…HHMY, LSLF…IFMV, AIIS…LYIH, and FLVH…LILL. [4Fe-4S] cluster is bound by residues C573 and C582. The next 2 helical transmembrane spans lie at 589 to 610 and 664 to 686; these read HVFL…HFSW and LSAY…MFLF. Residue H675 coordinates chlorophyll a'. Chlorophyll a-binding residues include M683 and Y691. Residue W692 coordinates phylloquinone. A helical transmembrane segment spans residues 724 to 744; the sequence is AVGVTHYLLGGIATTWAFFLA.

This sequence belongs to the PsaA/PsaB family. The PsaA/B heterodimer binds the P700 chlorophyll special pair and subsequent electron acceptors. PSI consists of a core antenna complex that captures photons, and an electron transfer chain that converts photonic excitation into a charge separation. The eukaryotic PSI reaction center is composed of at least 11 subunits. The cofactor is P700 is a chlorophyll a/chlorophyll a' dimer, A0 is one or more chlorophyll a, A1 is one or both phylloquinones and FX is a shared 4Fe-4S iron-sulfur center..

The protein resides in the plastid. The protein localises to the chloroplast thylakoid membrane. It carries out the reaction reduced [plastocyanin] + hnu + oxidized [2Fe-2S]-[ferredoxin] = oxidized [plastocyanin] + reduced [2Fe-2S]-[ferredoxin]. Its function is as follows. PsaA and PsaB bind P700, the primary electron donor of photosystem I (PSI), as well as the electron acceptors A0, A1 and FX. PSI is a plastocyanin-ferredoxin oxidoreductase, converting photonic excitation into a charge separation, which transfers an electron from the donor P700 chlorophyll pair to the spectroscopically characterized acceptors A0, A1, FX, FA and FB in turn. Oxidized P700 is reduced on the lumenal side of the thylakoid membrane by plastocyanin. This is Photosystem I P700 chlorophyll a apoprotein A1 from Daucus carota (Wild carrot).